We begin with the raw amino-acid sequence, 215 residues long: Ribose-5-phosphate isomerase A (215 aa).

Residues Thr-26 to Thr-29, Asp-79 to Asp-82, and Lys-92 to Gly-95 each bind substrate. Glu-101 functions as the Proton acceptor in the catalytic mechanism. Lys-119 serves as a coordination point for substrate.

The protein belongs to the ribose 5-phosphate isomerase family. In terms of assembly, homodimer.

The enzyme catalyses aldehydo-D-ribose 5-phosphate = D-ribulose 5-phosphate. Its pathway is carbohydrate degradation; pentose phosphate pathway; D-ribose 5-phosphate from D-ribulose 5-phosphate (non-oxidative stage): step 1/1. Functionally, catalyzes the reversible conversion of ribose-5-phosphate to ribulose 5-phosphate. This Xylella fastidiosa (strain Temecula1 / ATCC 700964) protein is Ribose-5-phosphate isomerase A.